A 200-amino-acid polypeptide reads, in one-letter code: GTP-binding protein rho5 (200 aa).

13-20 provides a ligand contact to GTP; it reads GDGACGKT. The Effector region motif lies at 35-43; the sequence is YVPTVFENY. Residues 60 to 64 and 118 to 121 each bind GTP; these read DTAGQ and CKVD. At C197 the chain carries Cysteine methyl ester. Residue C197 is the site of S-geranylgeranyl cysteine attachment. Residues 198–200 constitute a propeptide, removed in mature form; it reads ILL.

Belongs to the small GTPase superfamily. Rho family.

It is found in the cell membrane. The polypeptide is GTP-binding protein rho5 (rho5) (Schizosaccharomyces pombe (strain 972 / ATCC 24843) (Fission yeast)).